Reading from the N-terminus, the 156-residue chain is Putative thymidylate kinase (156 aa).

7–14 (GLDGTGKT) is a binding site for ATP.

Belongs to the thymidylate kinase family.

The enzyme catalyses dTMP + ATP = dTDP + ADP. It functions in the pathway pyrimidine metabolism; dTTP biosynthesis. In terms of biological role, catalyzes the conversion of dTMP to dTDP. This Acidianus convivator (ABV) protein is Putative thymidylate kinase.